We begin with the raw amino-acid sequence, 345 residues long: Photosystem II protein D1 (345 aa).

The next 3 membrane-spanning stretches (helical) occupy residues 30–47, 119–134, and 143–157; these read YVGW…TAAT, HFFI…EWEL, and WIAV…AASA. Histidine 119 provides a ligand contact to chlorophyll a. A pheophytin a-binding site is contributed by tyrosine 127. [CaMn4O5] cluster is bound by residues aspartate 171 and glutamate 190. Residues 198 to 219 traverse the membrane as a helical segment; sequence FHMLGVAGVFGGSLFSAMHGSL. Histidine 199 is a binding site for chlorophyll a. Residues histidine 216 and 265 to 266 each bind a quinone; that span reads SF. Histidine 216 serves as a coordination point for Fe cation. A Fe cation-binding site is contributed by histidine 273. Residues 275–289 form a helical membrane-spanning segment; it reads FLAVWPVVGIWFTAL. Residues histidine 333, glutamate 334, aspartate 343, and alanine 345 each contribute to the [CaMn4O5] cluster site.

It belongs to the reaction center PufL/M/PsbA/D family. As to quaternary structure, PSII is composed of 1 copy each of membrane proteins PsbA, PsbB, PsbC, PsbD, PsbE, PsbF, PsbH, PsbI, PsbJ, PsbK, PsbL, PsbM, PsbT, PsbY, PsbZ, Psb30/Ycf12, at least 3 peripheral proteins of the oxygen-evolving complex and a large number of cofactors. It forms dimeric complexes. The D1/D2 heterodimer binds P680, chlorophylls that are the primary electron donor of PSII, and subsequent electron acceptors. It shares a non-heme iron and each subunit binds pheophytin, quinone, additional chlorophylls, carotenoids and lipids. D1 provides most of the ligands for the Mn4-Ca-O5 cluster of the oxygen-evolving complex (OEC). There is also a Cl(-1) ion associated with D1 and D2, which is required for oxygen evolution. The PSII complex binds additional chlorophylls, carotenoids and specific lipids. serves as cofactor. Post-translationally, tyr-162 forms a radical intermediate that is referred to as redox-active TyrZ, YZ or Y-Z.

The protein resides in the plastid. It localises to the chloroplast thylakoid membrane. The catalysed reaction is 2 a plastoquinone + 4 hnu + 2 H2O = 2 a plastoquinol + O2. Its function is as follows. Photosystem II (PSII) is a light-driven water:plastoquinone oxidoreductase that uses light energy to abstract electrons from H(2)O, generating O(2) and a proton gradient subsequently used for ATP formation. It consists of a core antenna complex that captures photons, and an electron transfer chain that converts photonic excitation into a charge separation. The D1/D2 (PsbA/PsbD) reaction center heterodimer binds P680, the primary electron donor of PSII as well as several subsequent electron acceptors. This chain is Photosystem II protein D1, found in Euglena gracilis.